A 337-amino-acid chain; its full sequence is Hsp90 co-chaperone Cdc37-like 1 (337 aa).

A compositionally biased stretch (pro residues) spans 1 to 11 (MEQPWPPPGPW). The segment at 1–42 (MEQPWPPPGPWSLPRAEGEAEEENDLDVFPSSPRCPQLPGGS) is disordered. A self-association region spans residues 2–171 (EQPWPPPGPW…YEQKIRHFGM (170 aa)). Ser32 and Ser88 each carry phosphoserine. Residues 85-122 (NSESLDQEHAKAQIAVSELRQREEEWRQKEEALVQREK) adopt a coiled-coil conformation. Positions 147–277 (KDTEDEDKSE…SRVRLYSQSQ (131 aa)) are self-association and interaction with Hsp90. Residues 267 to 337 (KSRVRLYSQS…DDEPKMMDTV (71 aa)) form an interaction with Hsp70 region. The segment at 278–337 (SFQPMTVQNHVPHSGVGSIGLLESLPQNPDYLQYSINTALCSLNSVVHKEDDEPKMMDTV) is required for interaction with STIP1.

Belongs to the CDC37 family. Self-associates. Forms complexes with Hsp70 and Hsp90. Interacts with CDC37, FKBP4, PPID and STIP1.

Its subcellular location is the cytoplasm. Co-chaperone that binds to numerous proteins and promotes their interaction with Hsp70 and Hsp90. The protein is Hsp90 co-chaperone Cdc37-like 1 (CDC37L1) of Pongo abelii (Sumatran orangutan).